Here is a 545-residue protein sequence, read N- to C-terminus: Glucose-6-phosphate isomerase (545 aa).

Glu351 acts as the Proton donor in catalysis. Active-site residues include His382 and Lys510.

It belongs to the GPI family.

The protein localises to the cytoplasm. The catalysed reaction is alpha-D-glucose 6-phosphate = beta-D-fructose 6-phosphate. Its pathway is carbohydrate biosynthesis; gluconeogenesis. It participates in carbohydrate degradation; glycolysis; D-glyceraldehyde 3-phosphate and glycerone phosphate from D-glucose: step 2/4. Functionally, catalyzes the reversible isomerization of glucose-6-phosphate to fructose-6-phosphate. The polypeptide is Glucose-6-phosphate isomerase (Shewanella sp. (strain MR-4)).